The primary structure comprises 99 residues: NADH-quinone oxidoreductase subunit K (99 aa).

3 helical membrane-spanning segments follow: residues 3–23 (PANYLYLSALLFTIGASGVLL), 28–48 (IVMFMCVELMLNAVNLAFVTF), and 59–79 (MIAFFTMVVAACEVVVGLAII).

It belongs to the complex I subunit 4L family. NDH-1 is composed of 14 different subunits. Subunits NuoA, H, J, K, L, M, N constitute the membrane sector of the complex.

The protein resides in the cell membrane. It catalyses the reaction a quinone + NADH + 5 H(+)(in) = a quinol + NAD(+) + 4 H(+)(out). Its function is as follows. NDH-1 shuttles electrons from NADH, via FMN and iron-sulfur (Fe-S) centers, to quinones in the respiratory chain. The immediate electron acceptor for the enzyme in this species is believed to be a menaquinone. Couples the redox reaction to proton translocation (for every two electrons transferred, four hydrogen ions are translocated across the cytoplasmic membrane), and thus conserves the redox energy in a proton gradient. In Mycobacterium marinum (strain ATCC BAA-535 / M), this protein is NADH-quinone oxidoreductase subunit K.